The primary structure comprises 266 residues: E3 ubiquitin-protein ligase RNF170 (266 aa).

At 1 to 26 (MEGSVCVDGAAAPAPDEASLIEGVSN) the chain is on the lumenal side. Residues 27–47 (AVLLVLVLSVTLLAGLTTLLC) traverse the membrane as a helical segment. The Cytoplasmic portion of the chain corresponds to 48-209 (RSEQQRIHPE…GGLFWMFRVR (162 aa)). The segment at 88-131 (CPVCLQQAVLPVETNCGHLFCGSCIIAYWRYGTWLGAISCPICR) adopts an RING-type zinc-finger fold. A helical transmembrane segment spans residues 210-230 (ILLCVCGALAYLVSPLDFLPE). Position 231 (glycine 231) is a topological domain, lumenal. The helical transmembrane segment at 232 to 252 (VLGLLGFLDDFFVILLLFIYI) threads the bilayer. Topologically, residues 253-266 (SIMYREVVTQRLAG) are cytoplasmic.

Highly expressed in the developing brain, and less within intersomitic structures of the trunk.

It is found in the endoplasmic reticulum membrane. The catalysed reaction is S-ubiquitinyl-[E2 ubiquitin-conjugating enzyme]-L-cysteine + [acceptor protein]-L-lysine = [E2 ubiquitin-conjugating enzyme]-L-cysteine + N(6)-ubiquitinyl-[acceptor protein]-L-lysine.. It participates in protein modification; protein ubiquitination. In terms of biological role, E3 ubiquitin-protein ligase that plays an essential role in stimulus-induced inositol 1,4,5-trisphosphate receptor (ITPR) ubiquitination and degradation via the endoplasmic reticulum-associated degradation (ERAD) pathway. Also involved in ITPR turnover in resting cells. The chain is E3 ubiquitin-protein ligase RNF170 (rnf170) from Danio rerio (Zebrafish).